Here is a 189-residue protein sequence, read N- to C-terminus: Phosphoheptose isomerase (189 aa).

One can recognise an SIS domain in the interval 33–189; the sequence is CTDTLKAGNK…ELVEREIYGG (157 aa). Residue 48-50 participates in substrate binding; sequence NGG. Zn(2+) contacts are provided by histidine 57 and glutamate 61. Substrate-binding positions include glutamate 61, 90–91, 116–118, serine 121, and glutamine 168; these read ND and STS. Positions 168 and 176 each coordinate Zn(2+).

Belongs to the SIS family. GmhA subfamily. Zn(2+) is required as a cofactor.

The protein resides in the cytoplasm. The enzyme catalyses 2 D-sedoheptulose 7-phosphate = D-glycero-alpha-D-manno-heptose 7-phosphate + D-glycero-beta-D-manno-heptose 7-phosphate. Its pathway is carbohydrate biosynthesis; D-glycero-D-manno-heptose 7-phosphate biosynthesis; D-glycero-alpha-D-manno-heptose 7-phosphate and D-glycero-beta-D-manno-heptose 7-phosphate from sedoheptulose 7-phosphate: step 1/1. Catalyzes the isomerization of sedoheptulose 7-phosphate in D-glycero-D-manno-heptose 7-phosphate. The protein is Phosphoheptose isomerase of Akkermansia muciniphila (strain ATCC BAA-835 / DSM 22959 / JCM 33894 / BCRC 81048 / CCUG 64013 / CIP 107961 / Muc).